The chain runs to 663 residues: Translation factor GUF1 homolog, mitochondrial (663 aa).

Residues Glu-64–Pro-250 enclose the tr-type G domain. GTP-binding positions include Ala-73 to Ser-80, Asp-143 to His-147, and Asn-197 to Asp-200.

It belongs to the TRAFAC class translation factor GTPase superfamily. Classic translation factor GTPase family. LepA subfamily.

The protein resides in the mitochondrion inner membrane. The catalysed reaction is GTP + H2O = GDP + phosphate + H(+). Functionally, promotes mitochondrial protein synthesis. May act as a fidelity factor of the translation reaction, by catalyzing a one-codon backward translocation of tRNAs on improperly translocated ribosomes. Binds to mitochondrial ribosomes in a GTP-dependent manner. The polypeptide is Translation factor GUF1 homolog, mitochondrial (Arabidopsis thaliana (Mouse-ear cress)).